A 522-amino-acid chain; its full sequence is Zinc finger and BTB domain-containing protein 18 (522 aa).

The BTB domain maps to 24–91; that stretch reads CDCTVLVGDA…MYEGKLQFKD (68 aa). Positions 121 to 143 are enriched in basic and acidic residues; sequence ATTEADSTKKEEDASSCSDKVES. The interval 121 to 165 is disordered; the sequence is ATTEADSTKKEEDASSCSDKVESLSDGSSHMAGDLPSDEDEGEDE. Residue Ser157 is modified to Phosphoserine. Lys273 is covalently cross-linked (Glycyl lysine isopeptide (Lys-Gly) (interchain with G-Cter in SUMO2)). Positions 310–427 are interaction with DNMT3A; it reads EPAHLAPLRE…TFSCMYTLKR (118 aa). 4 consecutive C2H2-type zinc fingers follow at residues 370-392, 410-432, 438-460, and 466-489; these read FMCP…LSTH, PTCS…ERTH, YTCT…AVVH, and HACK…RKFH. A phosphoserine mark is found at Ser516 and Ser517.

The protein belongs to the krueppel C2H2-type zinc-finger protein family. ZBTB18 subfamily. In terms of assembly, interacts with DNMT3A.

It is found in the nucleus. In terms of biological role, transcriptional repressor that plays a role in various developmental processes such as myogenesis and brain development. Specifically binds the consensus DNA sequence 5'-[AC]ACATCTG[GT][AC]-3' which contains the E box core, and acts by recruiting chromatin remodeling multiprotein complexes. Plays a key role in myogenesis by directly repressing the expression of ID2 and ID3, 2 inhibitors of skeletal myogenesis. Also involved in controlling cell division of progenitor cells and regulating the survival of postmitotic cortical neurons. May also play a role in the organization of chromosomes in the nucleus. This Bos taurus (Bovine) protein is Zinc finger and BTB domain-containing protein 18 (ZBTB18).